The primary structure comprises 367 residues: 2-aminoethylphosphonate--pyruvate transaminase (367 aa).

Lys-193 carries the post-translational modification N6-(pyridoxal phosphate)lysine.

The protein belongs to the class-V pyridoxal-phosphate-dependent aminotransferase family. PhnW subfamily. As to quaternary structure, homodimer. Requires pyridoxal 5'-phosphate as cofactor.

The catalysed reaction is (2-aminoethyl)phosphonate + pyruvate = phosphonoacetaldehyde + L-alanine. Functionally, involved in phosphonate degradation. The protein is 2-aminoethylphosphonate--pyruvate transaminase of Vibrio parahaemolyticus serotype O3:K6 (strain RIMD 2210633).